A 141-amino-acid chain; its full sequence is Hemoglobin subunit alpha (141 aa).

The Globin domain occupies 1–141 (VLSPADKANI…VSTVLTSKYR (141 aa)). Phosphoserine is present on serine 3. An N6-succinyllysine mark is found at lysine 7 and lysine 11. Lysine 16 bears the N6-acetyllysine; alternate mark. Position 16 is an N6-succinyllysine; alternate (lysine 16). Tyrosine 24 carries the phosphotyrosine modification. Position 35 is a phosphoserine (serine 35). Lysine 40 bears the N6-succinyllysine mark. A Phosphoserine modification is found at serine 49. Histidine 58 lines the O2 pocket. Histidine 87 is a binding site for heme b. Serine 102 carries the phosphoserine modification. Threonine 108 carries the phosphothreonine modification. Phosphoserine occurs at positions 124 and 131. 2 positions are modified to phosphothreonine: threonine 134 and threonine 137. Serine 138 is subject to Phosphoserine.

It belongs to the globin family. As to quaternary structure, heterotetramer of two alpha chains and two beta chains. Red blood cells.

Its function is as follows. Involved in oxygen transport from the lung to the various peripheral tissues. Functionally, hemopressin acts as an antagonist peptide of the cannabinoid receptor CNR1. Hemopressin-binding efficiently blocks cannabinoid receptor CNR1 and subsequent signaling. The chain is Hemoglobin subunit alpha (HBA) from Meles meles (Eurasian badger).